We begin with the raw amino-acid sequence, 289 residues long: Ribosomal protein L11 methyltransferase (289 aa).

S-adenosyl-L-methionine is bound by residues threonine 142, glycine 163, aspartate 185, and asparagine 226.

It belongs to the methyltransferase superfamily. PrmA family.

The protein resides in the cytoplasm. The enzyme catalyses L-lysyl-[protein] + 3 S-adenosyl-L-methionine = N(6),N(6),N(6)-trimethyl-L-lysyl-[protein] + 3 S-adenosyl-L-homocysteine + 3 H(+). In terms of biological role, methylates ribosomal protein L11. The protein is Ribosomal protein L11 methyltransferase of Legionella pneumophila (strain Lens).